A 333-amino-acid polypeptide reads, in one-letter code: Neuropeptides B/W receptor type 2 (333 aa).

Residues 1 to 45 (MQAAGHPEPLDSRGSFSLPTMGANVSQDNGTGHNATFSEPLPFLY) lie on the Extracellular side of the membrane. N-linked (GlcNAc...) asparagine glycans are attached at residues Asn-24, Asn-29, and Asn-34. The helical transmembrane segment at 46-69 (VLLPAVYSGICAVGLTGNTAVILV) threads the bilayer. Topologically, residues 70 to 80 (ILRAPKMKTVT) are cytoplasmic. The helical transmembrane segment at 81–105 (NVFILNLAVADGLFTLVLPVNIAEH) threads the bilayer. The Extracellular segment spans residues 106–120 (LLQYWPFGELLCKLV). Cys-117 and Cys-197 are joined by a disulfide. Residues 121–140 (LAVDHYNIFSSIYFLAVMSV) traverse the membrane as a helical segment. The Cytoplasmic segment spans residues 141–165 (DRYLVVLATVRSRHMPWRTYRGAKV). A helical transmembrane segment spans residues 166 to 185 (ASLCVWLGVTVLVLPFFSFA). Over 186–211 (GVYSNELQVPSCGLSFPWPEQVWFKA) the chain is Extracellular. Residues 212-233 (SRVYTLVLGFVLPVCTICVLYT) form a helical membrane-spanning segment. The Cytoplasmic segment spans residues 234–257 (DLLRRLRAVRLRSGAKALGKARRK). Residues 258–282 (VTVLVLVVLAVCLLCWTPFHLASVV) form a helical membrane-spanning segment. Over 283-292 (ALTTDLPQTP) the chain is Extracellular. The helical transmembrane segment at 293-307 (LVISMSYVITSLSYA) threads the bilayer. Residues 308 to 333 (NSCLNPFLYAFLDDNFRKNFRSILRC) lie on the Cytoplasmic side of the membrane.

The protein belongs to the G-protein coupled receptor 1 family. In terms of tissue distribution, detected at high levels in caudate nucleus, hippocampus and amygdala; at moderate levels in the adult brain, thalamus, parietal cortex, pituitary gland, adrenal gland and lymph nodes.

It localises to the cell membrane. Interacts specifically with a number of opioid ligands. Receptor for neuropeptides B and W, which may be involved in neuroendocrine system regulation, food intake and the organization of other signals. This Homo sapiens (Human) protein is Neuropeptides B/W receptor type 2 (NPBWR2).